Consider the following 671-residue polypeptide: DNA ligase (671 aa).

NAD(+)-binding positions include Asp32–Asp36, Ser81–Leu82, and Glu113. Lys115 acts as the N6-AMP-lysine intermediate in catalysis. Arg136, Glu173, Lys290, and Lys314 together coordinate NAD(+). 4 residues coordinate Zn(2+): Cys408, Cys411, Cys426, and Cys432. The 79-residue stretch at Glu593 to Ser671 folds into the BRCT domain.

It belongs to the NAD-dependent DNA ligase family. LigA subfamily. Mg(2+) is required as a cofactor. It depends on Mn(2+) as a cofactor.

It carries out the reaction NAD(+) + (deoxyribonucleotide)n-3'-hydroxyl + 5'-phospho-(deoxyribonucleotide)m = (deoxyribonucleotide)n+m + AMP + beta-nicotinamide D-nucleotide.. DNA ligase that catalyzes the formation of phosphodiester linkages between 5'-phosphoryl and 3'-hydroxyl groups in double-stranded DNA using NAD as a coenzyme and as the energy source for the reaction. It is essential for DNA replication and repair of damaged DNA. This is DNA ligase from Escherichia coli O127:H6 (strain E2348/69 / EPEC).